The primary structure comprises 502 residues: Cytochrome P450 71A8 (502 aa).

Residues 16 to 36 form a helical membrane-spanning segment; sequence IISHTLAFQALVSLILLISIT. Positions 93 to 119 are disordered; sequence PVSSRRRPRGNHENSRSRLRRPRGSRS. Cysteine 447 lines the heme pocket.

The protein belongs to the cytochrome P450 family. Heme serves as cofactor.

It localises to the membrane. The chain is Cytochrome P450 71A8 (CYP71A8) from Mentha piperita (Peppermint).